The sequence spans 422 residues: Serine--tRNA ligase (422 aa).

231–233 (TAE) is an L-serine binding site. Position 261–263 (261–263 (RSE)) interacts with ATP. E284 contributes to the L-serine binding site. An ATP-binding site is contributed by 348 to 351 (EISS). Residue S383 coordinates L-serine.

This sequence belongs to the class-II aminoacyl-tRNA synthetase family. Type-1 seryl-tRNA synthetase subfamily. As to quaternary structure, homodimer. The tRNA molecule binds across the dimer.

It is found in the cytoplasm. It carries out the reaction tRNA(Ser) + L-serine + ATP = L-seryl-tRNA(Ser) + AMP + diphosphate + H(+). It catalyses the reaction tRNA(Sec) + L-serine + ATP = L-seryl-tRNA(Sec) + AMP + diphosphate + H(+). It participates in aminoacyl-tRNA biosynthesis; selenocysteinyl-tRNA(Sec) biosynthesis; L-seryl-tRNA(Sec) from L-serine and tRNA(Sec): step 1/1. In terms of biological role, catalyzes the attachment of serine to tRNA(Ser). Is also able to aminoacylate tRNA(Sec) with serine, to form the misacylated tRNA L-seryl-tRNA(Sec), which will be further converted into selenocysteinyl-tRNA(Sec). This chain is Serine--tRNA ligase, found in Mycoplasmopsis agalactiae (strain NCTC 10123 / CIP 59.7 / PG2) (Mycoplasma agalactiae).